The primary structure comprises 292 residues: Elongation factor Ts (292 aa).

The involved in Mg(2+) ion dislocation from EF-Tu stretch occupies residues 80–83 (TDFV).

It belongs to the EF-Ts family.

The protein resides in the cytoplasm. Its function is as follows. Associates with the EF-Tu.GDP complex and induces the exchange of GDP to GTP. It remains bound to the aminoacyl-tRNA.EF-Tu.GTP complex up to the GTP hydrolysis stage on the ribosome. This Mycoplasmopsis synoviae (strain 53) (Mycoplasma synoviae) protein is Elongation factor Ts.